We begin with the raw amino-acid sequence, 227 residues long: Flagellar L-ring protein (227 aa).

The first 16 residues, 1-16, serve as a signal peptide directing secretion; that stretch reads MRNIILFAAGTLLLSG. Residue Cys-17 is the site of N-palmitoyl cysteine attachment. Residue Cys-17 is the site of S-diacylglycerol cysteine attachment.

This sequence belongs to the FlgH family. In terms of assembly, the basal body constitutes a major portion of the flagellar organelle and consists of four rings (L,P,S, and M) mounted on a central rod.

It localises to the cell outer membrane. It is found in the bacterial flagellum basal body. Functionally, assembles around the rod to form the L-ring and probably protects the motor/basal body from shearing forces during rotation. The sequence is that of Flagellar L-ring protein from Pseudoalteromonas translucida (strain TAC 125).